Reading from the N-terminus, the 520-residue chain is BTB/POZ domain-containing protein At3g50780 (520 aa).

The interval 43–68 (SHNSLTKHKQSSPALQPPKPEKKPSS) is disordered. Residues 127 to 196 (AKVILVGKQG…MYCKDMKQRL (70 aa)) enclose the BTB domain.

It participates in protein modification; protein ubiquitination. Functionally, may act as a substrate-specific adapter of an E3 ubiquitin-protein ligase complex (CUL3-RBX1-BTB) which mediates the ubiquitination and subsequent proteasomal degradation of target proteins. The protein is BTB/POZ domain-containing protein At3g50780 of Arabidopsis thaliana (Mouse-ear cress).